Reading from the N-terminus, the 173-residue chain is Large ribosomal subunit protein uL16 (173 aa).

The protein belongs to the universal ribosomal protein uL16 family.

The sequence is that of Large ribosomal subunit protein uL16 from Methanosphaerula palustris (strain ATCC BAA-1556 / DSM 19958 / E1-9c).